The sequence spans 831 residues: MDPFEFLECSICSEEVIDFAAIFSSNKKFGDKACKHNFCVSCLTYLMEYNTRNKKALCCPICREEFDGFIQNKTSSDLLKQARKLSSAQIFLKNENSKLNEEINLIKNERENEAIQYRDRIKQLEDSKSKQVQESTNIKSRIKEMENEIQSLEQARLLDLQNNQSKFDTQQQQILTLTQSYRESQSNYNDSNLRANELNNQIQKLYREIEGFKQHAQQQDNYIKDIDSEKQLLQQQLSTIEQSYDRKQSDLLNNTRLKDLQIAKLSDANQQLGTSLSKIEAECEHFKKLYKEIQEDANGGYQKNKNLESAIASLNIELSRSKSVIDSLNTNKRTLEKELEEMKLLYQFGRGTSISSSIAPPTIINTANKITNSSYNLINNSIGYFMGSKNYLNDITKPYKGFKIEEKRGNKTSQIHKVSIGNGCGHFVIKLIPTVSGTNVGNSYSKFIYNSIYSSTLAESEILLFREAMLLYKLNHNNILKLESITKDESSGKYYSVLSPFVPKDLEFILAENSQNFGGLGKISPTTLTFSDIKYIVYQLISVVHYLHTQDLVHRDLKPTSILLFDDYQIKLCSFGNAISVFTNFGNSITQPTYSNPSSYSYLSPEYICSVLDKENHSKLSNEIDWKAFDMWSIGCIFLELIYKKKLFNNLNLDNNNNNNNNNNNNNNNNNNNNNNNNNNNNNNNNNNNNNNNNNNNIESNFNNVNNSQQQQLYSVLNNISTYKESAPKNGNLYFKENHNIIIKSKVERDFNGANLPTDAYNLLCALLSFNPTTRIKANQAAFHKFFKDEPYYIHDSASVSPNKLEDLSSLLTDRNIKQFLKEKCSNLIQV.

The RING-type zinc-finger motif lies at 9-63 (CSICSEEVIDFAAIFSSNKKFGDKACKHNFCVSCLTYLMEYNTRNKKALCCPICR). Residues 83–348 (RKLSSAQIFL…LEEMKLLYQF (266 aa)) are a coiled coil. Positions 414–787 (QIHKVSIGNG…ANQAAFHKFF (374 aa)) constitute a Protein kinase domain. The interval 657 to 703 (NNNNNNNNNNNNNNNNNNNNNNNNNNNNNNNNNNNNNNNNNIESNFN) is disordered.

It belongs to the protein kinase superfamily. CMGC Ser/Thr protein kinase family.

In Dictyostelium discoideum (Social amoeba), this protein is Probable inactive serine/threonine-protein kinase DDB_G0274613.